The following is a 47-amino-acid chain: Large ribosomal subunit protein bL34 (47 aa).

The interval Met1–Arg28 is disordered.

The protein belongs to the bacterial ribosomal protein bL34 family.

This chain is Large ribosomal subunit protein bL34, found in Corynebacterium efficiens (strain DSM 44549 / YS-314 / AJ 12310 / JCM 11189 / NBRC 100395).